The primary structure comprises 950 residues: Xylosyltransferase 1 (950 aa).

At 1–17 (MVAAPSARRLVRRSHSA) the chain is on the cytoplasmic side. The helical; Signal-anchor for type II membrane protein transmembrane segment at 18-38 (LLAALTVLLLQTLVGWNFSSL) threads the bilayer. At 39–950 (HSGAGERRGG…GAVKPDGRLR (912 aa)) the chain is on the lumenal side. Positions 42–246 (AGERRGGAAA…ELRYDQPPKC (205 aa)) are disordered. Residues 91-104 (PPARARARALAGCP) show a composition bias toward low complexity. Basic and acidic residues predominate over residues 134 to 150 (KVRTDSNNENSVPKDFE). Residues 152-161 (VDNSNFAPRT) are compositionally biased toward polar residues. Residues 166–193 (HQPELAKKPPSRQKELLKRRLEQEEKGK) show a composition bias toward basic and acidic residues. N-linked (GlcNAc...) asparagine glycosylation occurs at N215. Intrachain disulfides connect C246–C274, C290–C531, C550–C563, and C552–C561. UDP-alpha-D-xylose contacts are provided by residues V322, D350, and 379–381 (TIW). A glycan (N-linked (GlcNAc...) asparagine) is linked at N410. 483-484 (DW) is a UDP-alpha-D-xylose binding site. Residues S564 and 587-588 (RK) each bind UDP-alpha-D-xylose. Disulfide bonds link C664/C918 and C911/C924. N768 carries N-linked (GlcNAc...) asparagine glycosylation. Residues 931 to 950 (SFSPDPKSELGAVKPDGRLR) are disordered.

The protein belongs to the glycosyltransferase 14 family. XylT subfamily. In terms of assembly, monomer. It depends on a divalent metal cation as a cofactor. Post-translationally, contains 7 disulfide bonds. N-glycosylated.

It is found in the golgi apparatus membrane. It carries out the reaction UDP-alpha-D-xylose + L-seryl-[protein] = 3-O-(beta-D-xylosyl)-L-seryl-[protein] + UDP + H(+). It participates in glycan metabolism; chondroitin sulfate biosynthesis. Its pathway is glycan metabolism; heparan sulfate biosynthesis. Catalyzes the first step in the biosynthesis of chondroitin sulfate and dermatan sulfate proteoglycans, such as DCN. Transfers D-xylose from UDP-D-xylose to specific serine residues of the core protein. Required for normal maturation of chondrocytes during bone development, normal onset of ossification and normal embryonic and postnatal skeleton development, especially of the long bones. The protein is Xylosyltransferase 1 (XYLT1) of Canis lupus familiaris (Dog).